Consider the following 337-residue polypeptide: Schlafen family member 1 (337 aa).

A disordered region spans residues alanine 147 to glutamate 166. The segment covering proline 156–glutamate 166 has biased composition (basic and acidic residues).

Belongs to the Schlafen family. In terms of assembly, interacts with DNAJB6; promoting nuclear translocation and ability to promote cell-cycle arrest. As to expression, mainly expressed in the thymus, lymph node and spleen. Specifically expressed in T-lineage cells, but not in B-cells. Strongly up-regulated during the differentiation from CD4(+)CD8(+) double-positive (DP) to CD4(+) or CD8(+) single-positive (SP) thymocytes. Highly expressed in quiescent single-positive thymocytes and T-cells. The expression substantially decreases after TCR (T-cell receptor)-mediated activation.

The protein resides in the cytoplasm. Its subcellular location is the nucleus. Its function is as follows. Protein expressed in resting T-cells, which is required for maintaining T-cells in the quiescent state. Acts by promoting cell-cycle arrest of T-cells through inhibiting the expression of cyclin-D1 (CCND1). This is Schlafen family member 1 from Mus musculus (Mouse).